Consider the following 39-residue polypeptide: Omega-actinopoditoxin-Mb1a (39 aa).

3 disulfide bridges follow: C4–C19, C11–C30, and C18–C38.

Post-translationally, contains 3 disulfide bonds. As to expression, expressed by the venom gland.

The protein resides in the secreted. Potent inhibitor of insect, but not mammalian, voltage-gated calcium channels (Cav). The polypeptide is Omega-actinopoditoxin-Mb1a (Missulena bradleyi (Eastern mouse spider)).